Here is a 62-residue protein sequence, read N- to C-terminus: Delta-theraphotoxin-Cg1a 3 (62 aa).

The N-terminal stretch at 1 to 21 (MKTSILFVIFSLALVFALSPA) is a signal peptide. A propeptide spanning residues 22–29 (TEIEETDR) is cleaved from the precursor. Cystine bridges form between cysteine 31/cysteine 46, cysteine 38/cysteine 51, and cysteine 45/cysteine 58.

It belongs to the neurotoxin 10 (Hwtx-1) family. 33 (Jztx-1) subfamily. As to expression, expressed by the venom gland.

It localises to the secreted. Functionally, moderately inhibits voltage-gated sodium channels and weakly inhibits voltage-gated potassium channel. Inhibits the inactivation of rat Nav1.2/SCN2A (IC(50)=870 nM), rat Nav1.3/SCN3A (IC(50)=845 nM), rat Nav1.4/SCN4A (IC(50)=339 nM), human Nav1.5/SCN5A (IC(50)=335 nM) and human Nav1.7/SCN9A sodium channels (IC(50)=348 nM). The toxin delays the inactivation of sodium channels without affecting the activation and steady-state inactivation kinetics in the physiological range of voltages. Site-directed mutagenesis of the sodium channel indicates that the toxin interacts with site 3 located at the extracellular S3-S4 linker of domain IV. On potassium channels, it inhibits activation of channels with an IC(50) of 8.05 uM through a voltage sensor-trapping mechanism. It increases muscle contraction in several assays (mouse phrenic nerve-diaphragm, toad heart, rat vas deferens) and is suggested to act both presynaptically and postsynaptically. The protein is Delta-theraphotoxin-Cg1a 3 of Chilobrachys guangxiensis (Chinese earth tiger tarantula).